Consider the following 849-residue polypeptide: Autoinducer 1 sensor kinase/phosphatase LuxN (849 aa).

7 helical membrane passes run 9–29 (IVYA…MWLF), 41–61 (VIFG…IAWI), 160–180 (SYFF…LVAM), 196–216 (IAGI…MTYF), 220–242 (FSLT…YALL), 251–275 (YIAY…AIFI), and 283–301 (WLIA…QLLY). A Histidine kinase domain is found at 468 to 683 (SIAHEMRNPL…EFHLYFPVVP (216 aa)). The residue at position 471 (His471) is a Phosphohistidine; by autocatalysis. In terms of domain architecture, Response regulatory spans 722-835 (TVLIVDDKEV…ALRHVLGNWL (114 aa)). Position 771 is a 4-aspartylphosphate (Asp771).

Its subcellular location is the cell inner membrane. It catalyses the reaction ATP + protein L-histidine = ADP + protein N-phospho-L-histidine.. Its activity is regulated as follows. The phosphatase activity is constitutive and the kinase activity is regulated by the presence or absence of AI-1. At low cell density the kinase activity overrides the phosphatase activity. Its function is as follows. At low cell density, in the absence of AI-1 (autoinducer 1), LuxN has a kinase activity and autophosphorylates on His-471. The phosphoryl group is then transferred on Asp-771 of the response regulator domain. The phosphoryl group is transferred to LuxU, and ultimately to LuxO. At high cell density, in the presence of AI-1, the kinase activity is inactivated, and the response regulator domain has a phosphatase activity. LuxN phosphatase acts on itself. As LuxU could function to establish an equilibrium between the aspartyl-phosphate of LuxN and the aspartyl-phosphate of LuxO, LuxU transfers phosphate from LuxO to LuxN and finally phosphate is drained from the system. In Vibrio campbellii (strain ATCC BAA-1116), this protein is Autoinducer 1 sensor kinase/phosphatase LuxN (luxN).